A 571-amino-acid chain; its full sequence is Urease subunit alpha (571 aa).

The region spanning 132–571 (GGIDSHIHFI…LPMAQRYFLF (440 aa)) is the Urease domain. The Ni(2+) site is built by histidine 137, histidine 139, and lysine 220. Lysine 220 carries the N6-carboxylysine modification. Histidine 222 is a substrate binding site. Histidine 249 and histidine 275 together coordinate Ni(2+). Histidine 323 (proton donor) is an active-site residue. Aspartate 363 contributes to the Ni(2+) binding site.

The protein belongs to the metallo-dependent hydrolases superfamily. Urease alpha subunit family. As to quaternary structure, heterotrimer of UreA (gamma), UreB (beta) and UreC (alpha) subunits. Three heterotrimers associate to form the active enzyme. Ni cation is required as a cofactor. Carboxylation allows a single lysine to coordinate two nickel ions.

The protein localises to the cytoplasm. It carries out the reaction urea + 2 H2O + H(+) = hydrogencarbonate + 2 NH4(+). It participates in nitrogen metabolism; urea degradation; CO(2) and NH(3) from urea (urease route): step 1/1. The protein is Urease subunit alpha of Kocuria rhizophila (strain ATCC 9341 / DSM 348 / NBRC 103217 / DC2201).